We begin with the raw amino-acid sequence, 184 residues long: MGLEEKLPSGFLLSTVESFAGYLRKGSVWPATFGLACCAIEMMATGAGRFDIARFGMEAFRASPRQADLMIVAGRVSQKMAPVLRQVYDQMAEPKWVLAMGVCASSGGMFNNYAVVQGVDHVVPVDIYLPGCPPRPEMLLNAILALHDKIQHTPLGVNRQEAVRAAEQAALAATPTIRMEGLLR.

[4Fe-4S] cluster-binding residues include Cys37, Cys38, Cys103, and Cys132.

Belongs to the complex I 20 kDa subunit family. NDH-1 is composed of 14 different subunits. Subunits NuoB, C, D, E, F, and G constitute the peripheral sector of the complex. Requires [4Fe-4S] cluster as cofactor.

Its subcellular location is the cell membrane. It catalyses the reaction a quinone + NADH + 5 H(+)(in) = a quinol + NAD(+) + 4 H(+)(out). Its function is as follows. NDH-1 shuttles electrons from NADH, via FMN and iron-sulfur (Fe-S) centers, to quinones in the respiratory chain. The immediate electron acceptor for the enzyme in this species is believed to be a menaquinone. Couples the redox reaction to proton translocation (for every two electrons transferred, four hydrogen ions are translocated across the cytoplasmic membrane), and thus conserves the redox energy in a proton gradient. In Nocardia farcinica (strain IFM 10152), this protein is NADH-quinone oxidoreductase subunit B.